The sequence spans 161 residues: Pro-corazonin (161 aa).

Residues 1–20 form the signal peptide; that stretch reads MMRLLLLPLFLFTLSMACMG. Glutamine 21 bears the Pyrrolidone carboxylic acid mark. At asparagine 31 the chain carries Asparagine amide. A propeptide spanning residues 70 to 161 is cleaved from the precursor; that stretch reads LERCLAQLQR…SGEPSVFGKH (92 aa). Disordered stretches follow at residues 93–125 and 142–161; these read NANRPEPDSSDSGSSRNRANNNNENVLYPTPIQ and VAGSGPTGAGSGEPSVFGKH. Residues 102–117 are compositionally biased toward low complexity; that stretch reads SDSGSSRNRANNNNEN.

It belongs to the corazonin family.

It is found in the secreted. Cardioactive peptide. Corazonin is probably involved in the physiological regulation of the heart beat. Clock (Clk) and cycle (cyc) proteins negatively regulate Crz transcription in a cell-specific manner. This chain is Pro-corazonin, found in Drosophila pseudoobscura pseudoobscura (Fruit fly).